A 487-amino-acid chain; its full sequence is Serine/threonine-protein kinase BSK8 (487 aa).

G2 is lipidated: N-myristoyl glycine. At S20 the chain carries Phosphoserine. The Protein kinase domain maps to 59–325; sequence ENIVSEHGER…DLEIASHQLL (267 aa). ATP is bound by residues 65 to 73, N71, K87, and 133 to 135; these read HGERAPNVV and EFM. D181 acts as the Proton acceptor in catalysis. ATP is bound by residues 185–186 and N205; that span reads YR. Phosphoserine is present on S213.

It belongs to the protein kinase superfamily. Ser/Thr protein kinase family. In terms of assembly, interacts with ASK7/BIN2, BSK1, BSK5, BSK6 and BSK11. Interacts with BSL2. Phosphorylated by BRI1, ASK7/BIN2 and ASK9/BIL2.

The protein localises to the cell membrane. The catalysed reaction is L-seryl-[protein] + ATP = O-phospho-L-seryl-[protein] + ADP + H(+). The enzyme catalyses L-threonyl-[protein] + ATP = O-phospho-L-threonyl-[protein] + ADP + H(+). In terms of biological role, probable serine/threonine kinase that acts as a positive regulator of brassinosteroid (BR) signaling downstream of the receptor kinase BRI1. Functions redundantly with BSK3, BSK4, BSK6 and BSK7. Involved in the regulation of sucrose-phosphate synthase 1 (SPS1) in the context of sucrose resuply after starvation. Activates BSL2, a phosphatase that may dephosphorylate SPS1, leading to the activation of SPS1. The polypeptide is Serine/threonine-protein kinase BSK8 (Arabidopsis thaliana (Mouse-ear cress)).